The chain runs to 649 residues: Protein mitoshell (649 aa).

Basic and acidic residues predominate over residues 167 to 176 (LRSEARKPRP). Disordered stretches follow at residues 167 to 193 (LRSE…ESGA), 389 to 414 (HGPS…EPTS), and 485 to 512 (ALPS…VRSY). Low complexity predominate over residues 177–191 (ESVVPEESSISSLES). Polar residues-rich tracts occupy residues 393–414 (AFST…EPTS) and 485–503 (ALPS…SPQS).

Functionally, required for male meiotic cytokinesis through its involvement in the regulation of mitochondrial aggregation and fusion, astral spindle assembly and contractile ring formation. This is Protein mitoshell from Drosophila melanogaster (Fruit fly).